The chain runs to 500 residues: Glutamyl-tRNA(Gln) amidotransferase subunit A (500 aa).

Residues Lys81 and Ser161 each act as charge relay system in the active site. Residue Ser185 is the Acyl-ester intermediate of the active site.

The protein belongs to the amidase family. GatA subfamily. Heterotrimer of A, B and C subunits.

The catalysed reaction is L-glutamyl-tRNA(Gln) + L-glutamine + ATP + H2O = L-glutaminyl-tRNA(Gln) + L-glutamate + ADP + phosphate + H(+). Its function is as follows. Allows the formation of correctly charged Gln-tRNA(Gln) through the transamidation of misacylated Glu-tRNA(Gln) in organisms which lack glutaminyl-tRNA synthetase. The reaction takes place in the presence of glutamine and ATP through an activated gamma-phospho-Glu-tRNA(Gln). The chain is Glutamyl-tRNA(Gln) amidotransferase subunit A from Rhodospirillum rubrum (strain ATCC 11170 / ATH 1.1.1 / DSM 467 / LMG 4362 / NCIMB 8255 / S1).